The chain runs to 588 residues: Nucleoporin ndc-1 (588 aa).

The segment covering 1–12 (MMGDSHSSFTTT) has biased composition (polar residues). The disordered stretch occupies residues 1–55 (MMGDSHSSFTTTTDEHLYNQFSPGRRKNDFPAASSSSSSPNLRRSPNRTVSSPRV). The Cytoplasmic segment spans residues 1–79 (MMGDSHSSFT…FQAEISVRKR (79 aa)). A compositionally biased stretch (low complexity) spans 31–48 (PAASSSSSSPNLRRSPNR). Residues 80–100 (LAGAACGYLSTIFFIVTVSIL) form a helical membrane-spanning segment. The Perinuclear space segment spans residues 101 to 122 (KLTIWAPFSSVQDSLAWWIYPN). A helical membrane pass occupies residues 123-143 (AWASIIFVGIASVAMSLFSII). The Cytoplasmic portion of the chain corresponds to 144 to 159 (KFCKVDQLPRLAATDT). The helical transmembrane segment at 160 to 180 (FALAGVALEFVTRLTFVYTAF) threads the bilayer. Residues 181-190 (CVADFSFSRE) lie on the Perinuclear space side of the membrane. A helical membrane pass occupies residues 191-211 (FAFVAISLAIAISSALVVFRS). The Cytoplasmic portion of the chain corresponds to 212–255 (DYQLNFSHIQVNSVKTLIDFGTSLPYANISEICGIDAAISYTAA). A helical membrane pass occupies residues 256–276 (VALILVVGPMVSGFSAWWLLL). Residue asparagine 277 is a topological domain, perinuclear space. A helical transmembrane segment spans residues 278-298 (IPFHVVLFGLCFTQQFYSKIS). Residues 299–588 (MKIVNQIVMK…IRMICLTDEL (290 aa)) lie on the Cytoplasmic side of the membrane.

The protein belongs to the NDC1 family.

The protein resides in the nucleus. It is found in the nuclear pore complex. The protein localises to the nucleus membrane. Component of the nuclear pore complex (NPC), which plays a key role in de novo assembly and insertion of NPC in the nuclear envelope. Plays a role in postmitotic nuclear pore complex assembly potentially by promoting localization of nuclear pore complex proteins to the nuclear rim. The protein is Nucleoporin ndc-1 of Caenorhabditis elegans.